The primary structure comprises 727 residues: Translation initiation factor IF-2, mitochondrial (727 aa).

The transit peptide at 1–29 (MNRKILKLENLLRFHTICRQLHSLCQRRM) directs the protein to the mitochondrion. A tr-type G domain is found at 178–348 (PRSPVVTIMG…IALAEMLELK (171 aa)). The interval 187–194 (GHVDHGKT) is G1. 187-194 (GHVDHGKT) is a GTP binding site. Residues 212-216 (GITQH) are G2. GTP contacts are provided by residues 234–237 (DTPG) and 288–291 (NKCD). The interval 234 to 237 (DTPG) is G3. Positions 288-291 (NKCD) are G4. The segment at 324 to 326 (SAL) is G5. Thr-688 carries the post-translational modification Phosphothreonine.

This sequence belongs to the TRAFAC class translation factor GTPase superfamily. Classic translation factor GTPase family. IF-2 subfamily. Monomer.

Its subcellular location is the mitochondrion. One of the essential components for the initiation of protein synthesis. Protects formylmethionyl-tRNA from spontaneous hydrolysis and promotes its binding to the 30S ribosomal subunits. Also involved in the hydrolysis of GTP during the formation of the 70S ribosomal complex. The sequence is that of Translation initiation factor IF-2, mitochondrial (MTIF2) from Bos taurus (Bovine).